Consider the following 284-residue polypeptide: CUE domain-containing protein 2 (284 aa).

The 44-residue stretch at 141–184 (EELPGVDVLLEVFPTCSMEQAQWVLAKARGDLEEAVHMLVEGKE) folds into the CUE domain. Residues 183-204 (KEEGPPGWDGPSQDLPRRLRGP) form a disordered region.

This sequence belongs to the CUEDC2 family. In terms of assembly, interacts with PGR and ESR1.

The protein resides in the cytoplasm. It is found in the nucleus. Controls PGR and ESR1 protein levels through their targeting for ubiquitination and subsequent proteasomal degradation. In Mus musculus (Mouse), this protein is CUE domain-containing protein 2 (Cuedc2).